Consider the following 228-residue polypeptide: Octanoyltransferase (228 aa).

One can recognise a BPL/LPL catalytic domain in the interval 32–214; that stretch reads DVVPDTVLLV…HLRRLFERDW (183 aa). Substrate-binding positions include 77–84, 144–146, and 157–159; these read RGGDVTYH, SVG, and GIA. The active-site Acyl-thioester intermediate is the cysteine 175.

This sequence belongs to the LipB family.

It is found in the cytoplasm. The catalysed reaction is octanoyl-[ACP] + L-lysyl-[protein] = N(6)-octanoyl-L-lysyl-[protein] + holo-[ACP] + H(+). It functions in the pathway protein modification; protein lipoylation via endogenous pathway; protein N(6)-(lipoyl)lysine from octanoyl-[acyl-carrier-protein]: step 1/2. Catalyzes the transfer of endogenously produced octanoic acid from octanoyl-acyl-carrier-protein onto the lipoyl domains of lipoate-dependent enzymes. Lipoyl-ACP can also act as a substrate although octanoyl-ACP is likely to be the physiological substrate. The sequence is that of Octanoyltransferase from Syntrophobacter fumaroxidans (strain DSM 10017 / MPOB).